A 262-amino-acid chain; its full sequence is TLC domain-containing protein 4-B (262 aa).

Transmembrane regions (helical) follow at residues 6-26 (PLTV…FHVG), 53-73 (TVSS…LVYD), 90-110 (LNVA…IYYW), 122-142 (HLAA…PYFG), 177-197 (GVLM…IYYG), and 218-238 (AWII…IKIA). In terms of domain architecture, TLC spans 44–246 (RQKIEWNSRT…IAKGCYKVLY (203 aa)).

It belongs to the TLCD4 family.

It localises to the membrane. The chain is TLC domain-containing protein 4-B (tlcd4-b) from Xenopus laevis (African clawed frog).